Reading from the N-terminus, the 393-residue chain is Epoxyqueuosine reductase (393 aa).

Asp-154 serves as the catalytic Proton donor. A 4Fe-4S ferredoxin-type domain is found at 196-228; the sequence is LPLPVDIPVQEGCHSCVACITSCPTGAIVEPYT. [4Fe-4S] cluster-binding residues include Cys-208, Cys-211, Cys-214, Cys-218, Cys-234, Cys-261, Cys-264, and Cys-268.

It belongs to the QueG family. As to quaternary structure, monomer. Cob(II)alamin serves as cofactor. [4Fe-4S] cluster is required as a cofactor.

The protein localises to the cytoplasm. It carries out the reaction epoxyqueuosine(34) in tRNA + AH2 = queuosine(34) in tRNA + A + H2O. Its pathway is tRNA modification; tRNA-queuosine biosynthesis. Catalyzes the conversion of epoxyqueuosine (oQ) to queuosine (Q), which is a hypermodified base found in the wobble positions of tRNA(Asp), tRNA(Asn), tRNA(His) and tRNA(Tyr). The polypeptide is Epoxyqueuosine reductase (Shewanella oneidensis (strain ATCC 700550 / JCM 31522 / CIP 106686 / LMG 19005 / NCIMB 14063 / MR-1)).